Consider the following 516-residue polypeptide: uncharacterized protein (516 aa).

Residues 1-17 form the signal peptide; the sequence is MSVWVALALLGMCVSCT. 2 disordered regions span residues 29 to 197 and 296 to 426; these read KEPP…EVPR and RTVS…RDHL. Residues 71–85 show a composition bias toward basic and acidic residues; sequence RVPESSQEREQKPES. Over residues 122 to 144 the composition is skewed to pro residues; that stretch reads VAPPAPPAPTAPRPHRPSPPPVS. Low complexity predominate over residues 145-155; the sequence is PSASKPKQRAV. Over residues 351 to 367 the composition is skewed to basic and acidic residues; the sequence is KAQHGTPRPDEKKDREP. The span at 394–406 shows a compositional bias: low complexity; it reads SPASQPSAPSAAP. The span at 415–426 shows a compositional bias: basic and acidic residues; that stretch reads AHKEGQEKRDHL.

This is an uncharacterized protein from Treponema pallidum (strain Nichols).